A 467-amino-acid chain; its full sequence is Cysteine--tRNA ligase (467 aa).

Zn(2+) is bound at residue Cys28. The 'HIGH' region motif lies at 30-40 (MTVYDHCHLGH). The Zn(2+) site is built by Cys209, His234, and Glu238. The 'KMSKS' region signature appears at 266-270 (KMSKS). Lys269 provides a ligand contact to ATP.

This sequence belongs to the class-I aminoacyl-tRNA synthetase family. In terms of assembly, monomer. The cofactor is Zn(2+).

Its subcellular location is the cytoplasm. It catalyses the reaction tRNA(Cys) + L-cysteine + ATP = L-cysteinyl-tRNA(Cys) + AMP + diphosphate. The chain is Cysteine--tRNA ligase from Nitrosomonas eutropha (strain DSM 101675 / C91 / Nm57).